Here is a 149-residue protein sequence, read N- to C-terminus: Protein NrdI (149 aa).

This sequence belongs to the NrdI family.

In terms of biological role, probably involved in ribonucleotide reductase function. This chain is Protein NrdI, found in Malacoplasma penetrans (strain HF-2) (Mycoplasma penetrans).